Consider the following 219-residue polypeptide: RING finger protein nenya (219 aa).

The RING-type zinc-finger motif lies at 6 to 48; sequence CNKCFRRRNVEPTLIFHMTQCQHVLCASCLSESSTDKKCPLCK. The disordered stretch occupies residues 161–181; it reads NQARGLRPRTPSVTTSDNTQS.

May interact with itself, with narya and vilya through its RING-type zinc finger.

Required for the formation of DNA double-strand breaks together with narya and vilya during the meiotic recombination process. Plays a redundant role with narya in chromosome segregation during female meiosis. The chain is RING finger protein nenya from Drosophila melanogaster (Fruit fly).